We begin with the raw amino-acid sequence, 152 residues long: Snaclec coagulation factor IX/factor X-binding protein subunit A (152 aa).

A signal peptide spans 1–23; sequence MGRFIFVSFGLLVVAASLSGTGA. 3 disulfides stabilise this stretch: C25–C36, C53–C150, and C125–C142. Residues 32–151 enclose the C-type lectin domain; that stretch reads YEGHCYKAFE…CGQRIPFVCE (120 aa). Ca(2+) is bound by residues S64, E66, and E70. E151 serves as a coordination point for Ca(2+).

It belongs to the snaclec family. Heterodimer of subunits A and B; disulfide-linked. In terms of tissue distribution, expressed by the venom gland.

It is found in the secreted. Functionally, anticoagulant protein which binds to the gamma-carboxyglutamic acid-domain regions of factors IX (F9) and factor X (F10) in the presence of calcium with a 1 to 1 stoichiometry. This is Snaclec coagulation factor IX/factor X-binding protein subunit A from Trimeresurus stejnegeri (Chinese green tree viper).